Here is a 250-residue protein sequence, read N- to C-terminus: 5-oxoprolinase subunit A (250 aa).

The protein belongs to the LamB/PxpA family. In terms of assembly, forms a complex composed of PxpA, PxpB and PxpC.

The enzyme catalyses 5-oxo-L-proline + ATP + 2 H2O = L-glutamate + ADP + phosphate + H(+). Its function is as follows. Catalyzes the cleavage of 5-oxoproline to form L-glutamate coupled to the hydrolysis of ATP to ADP and inorganic phosphate. The chain is 5-oxoprolinase subunit A from Streptomyces griseus subsp. griseus (strain JCM 4626 / CBS 651.72 / NBRC 13350 / KCC S-0626 / ISP 5235).